Reading from the N-terminus, the 552-residue chain is MSDIALSISILALVAVLGLWIGNWRICGVGLGIGGVLFGGIFVGHFTDSWGVALDSHTLHFIQEFGLILFVYTIGIQVGPGFFASLRSSGLKLNAFAALVVLLGCIVAIGLYKIFDVPLPVILGIFSGAVTNTPSLGAGQQILTELGAQEGMLDLTGMGYAVAYPFGICGILLTMWILRLAFRVNVDKEAEEFEVQNGHKKQNLHTLNVAIRNPNLNGLQLKDVPALAEGDIVCSRLKRGEKLHVPRPDTRIETNDLLHLVGAKHALEKARLVIGEVVDASLSTRGTDLRVQRLVVTNEIVLGKKISHLDLKEKYDVVVSRLNRAGVELVPTSQTTLQFGDILNLVGRQEAIESVSGIVGNAHQKLQQVQMLPVFVGIGLGVLLGSIPFYLPGFPAAIKLGLAGGPLLVALILARIGSIGKLYWFMPPSANLALREIGIVLFLAVVGLKSGGGFVDTLVNGDGLSWMGYGIVITLVPLLTVGFLARIVGQLNYLTICGMLAGSMTDPPALAFANGLHPTSGASALSYATVYPLVMCLRILSPQILALLLWAV.

5 helical membrane passes run 4 to 24, 26 to 46, 65 to 85, 95 to 115, and 158 to 178; these read IALSISILALVAVLGLWIGNW, ICGVGLGIGGVLFGGIFVGHF, FGLILFVYTIGIQVGPGFFAS, AFAALVVLLGCIVAIGLYKIF, and MGYAVAYPFGICGILLTMWIL. RCK C-terminal domains follow at residues 188 to 276 and 279 to 361; these read KEAE…VIGE and DASL…IVGN. 6 helical membrane-spanning segments follow: residues 371–391, 394–414, 439–459, 464–484, 493–513, and 532–552; these read MLPVFVGIGLGVLLGSIPFYL, FPAAIKLGLAGGPLLVALILA, IVLFLAVVGLKSGGGFVDTLV, LSWMGYGIVITLVPLLTVGFL, YLTICGMLAGSMTDPPALAFA, and PLVMCLRILSPQILALLLWAV.

It belongs to the AAE transporter (TC 2.A.81) family. YidE subfamily.

It is found in the cell membrane. The polypeptide is Putative transport protein PBPRA2144 (Photobacterium profundum (strain SS9)).